We begin with the raw amino-acid sequence, 152 residues long: MSVDLSSYRDQHFKGSRSEQERLLRLSTTLYVGNMSFYTTEEQIYELFSKCGDVKKVIMGLDRFHKTPCGFCFVEYYTREDAENAIRYVNGTKLDDRIIRTDWDAGFVEGRQFGRGKSGGQVRDEYRTDYDSGRGGYGKLMAQRVVPPPAVV.

MRNA contacts are provided by residues Tyr8, Tyr31, 100 to 104 (RTDWD), 111 to 115 (RQFGR), and 121 to 122 (QV). One can recognise an RRM domain in the interval 28–106 (TTLYVGNMSF…RIIRTDWDAG (79 aa)).

This sequence belongs to the RRM NCBP2 family. As to quaternary structure, component of the nuclear cap-binding complex (CBC), a heterodimer composed of Cbp80 and Cbp20 that interacts with m7GpppG-capped RNA.

The protein resides in the nucleus. Component of the cap-binding complex (CBC), which binds co-transcriptionally to the 5' cap of pre-mRNAs and is involved in various processes such as pre-mRNA splicing and RNA-mediated gene silencing (RNAi). The CBC complex is involved in miRNA-mediated RNA interference and is required for primary microRNAs (miRNAs) processing. Also involved in innate immunity via the short interfering RNAs (siRNAs) processing machinery by restricting the viral RNA production. In the CBC complex, Cbp20 recognizes and binds capped RNAs (m7GpppG-capped RNA) but requires Cbp80 to stabilize the movement of its N-terminal loop and lock the CBC into a high affinity cap-binding state with the cap structure. The polypeptide is Nuclear cap-binding protein subunit 2 (Cbp20) (Ixodes scapularis (Black-legged tick)).